Reading from the N-terminus, the 251-residue chain is uncharacterized protein (251 aa).

A disordered region spans residues 1–22 (MTQLPELGLRSPNNKSPTGPHP).

This is an uncharacterized protein from Homo sapiens (Human).